The primary structure comprises 196 residues: Probable malonic semialdehyde reductase RutE (196 aa).

It belongs to the nitroreductase family. HadB/RutE subfamily. FMN is required as a cofactor.

The catalysed reaction is 3-hydroxypropanoate + NADP(+) = 3-oxopropanoate + NADPH + H(+). Functionally, may reduce toxic product malonic semialdehyde to 3-hydroxypropionic acid, which is excreted. This Yersinia enterocolitica serotype O:8 / biotype 1B (strain NCTC 13174 / 8081) protein is Probable malonic semialdehyde reductase RutE.